A 306-amino-acid chain; its full sequence is Dermonecrotic toxin LiSicTox-alphaIA2bi (306 aa).

The N-terminal stretch at 1–18 (MLPYIALILVCWSVLSQA) is a signal peptide. Residues 19–26 (AQTDVEGR) constitute a propeptide that is removed on maturation. The active site involves H38. Mg(2+)-binding residues include E58 and D60. H74 acts as the Nucleophile in catalysis. 2 disulfides stabilise this stretch: C78–C84 and C80–C223. D118 lines the Mg(2+) pocket. N283 carries N-linked (GlcNAc...) asparagine glycosylation.

The protein belongs to the arthropod phospholipase D family. Class II subfamily. Mg(2+) serves as cofactor. Expressed by the venom gland.

It is found in the secreted. It carries out the reaction an N-(acyl)-sphingosylphosphocholine = an N-(acyl)-sphingosyl-1,3-cyclic phosphate + choline. The enzyme catalyses an N-(acyl)-sphingosylphosphoethanolamine = an N-(acyl)-sphingosyl-1,3-cyclic phosphate + ethanolamine. The catalysed reaction is a 1-acyl-sn-glycero-3-phosphocholine = a 1-acyl-sn-glycero-2,3-cyclic phosphate + choline. It catalyses the reaction a 1-acyl-sn-glycero-3-phosphoethanolamine = a 1-acyl-sn-glycero-2,3-cyclic phosphate + ethanolamine. In terms of biological role, dermonecrotic toxins cleave the phosphodiester linkage between the phosphate and headgroup of certain phospholipids (sphingolipid and lysolipid substrates), forming an alcohol (often choline) and a cyclic phosphate. This toxin acts on sphingomyelin (SM). It may also act on ceramide phosphoethanolamine (CPE), lysophosphatidylcholine (LPC) and lysophosphatidylethanolamine (LPE), but not on lysophosphatidylserine (LPS), and lysophosphatidylglycerol (LPG). It acts by transphosphatidylation, releasing exclusively cyclic phosphate products as second products. Induces dermonecrosis, hemolysis, increased vascular permeability, edema, inflammatory response, and platelet aggregation. The protein is Dermonecrotic toxin LiSicTox-alphaIA2bi of Loxosceles intermedia (Brown spider).